Reading from the N-terminus, the 469-residue chain is A-type ATP synthase subunit B (469 aa).

The protein belongs to the ATPase alpha/beta chains family. Has multiple subunits with at least A(3), B(3), C, D, E, F, H, I and proteolipid K(x).

The protein localises to the cell membrane. Its function is as follows. Component of the A-type ATP synthase that produces ATP from ADP in the presence of a proton gradient across the membrane. The B chain is a regulatory subunit. The protein is A-type ATP synthase subunit B of Staphylothermus marinus (strain ATCC 43588 / DSM 3639 / JCM 9404 / F1).